The chain runs to 414 residues: MLILTKTAGVFFKPSKRKVYEFLRSFNFHPGTLFLHKIVLGIETSCDDTAAAVVDETGNVLGEAIHSQTEVHLKTGGIVPPAAQQLHRENIQRIVQEALSASGVSPSDLSAIATTIKPGLALSLGVGLSFSLQLVGQLKKPFIPIHHMEAHALTIRLTNKVEFPFLVLLISGGHCLLALVQGVSDFLLLGKSLDIAPGDMLDKVARRLSLIKHPECSTMSGGKAIEHLAKQGNRFHFDIKPPLHHAKNCDFSFTGLQHVTDKIIMKKEKEEGIEKGQILSSAADIAATVQHTMACHLVKRTHRAILFCKQRDLLPQNNAVLVASGGVASNFYIRRALEILTNATQCTLLCPPPRLCTDNGIMIAWNGIERLRAGLGILHDIEGIRYEPKCPLGVDISKEVGEASIKVPQLKMEI.

Residues 1 to 29 (MLILTKTAGVFFKPSKRKVYEFLRSFNFH) constitute a mitochondrion transit peptide. An N6-acetyllysine mark is found at Lys74 and Lys140. Positions 147 and 151 each coordinate a divalent metal cation. Substrate-binding positions include 169–173 (LISGG) and Asp202. The residue at position 203 (Lys203) is an N6-acetyllysine. Substrate is bound by residues Gly222 and Glu226. Lys230, Lys240, and Lys299 each carry N6-acetyllysine. Residues 329-330 (SN) and Thr357 contribute to the substrate site. A divalent metal cation is bound at residue Asp358.

This sequence belongs to the KAE1 / TsaD family. As to quaternary structure, monomer. A divalent metal cation serves as cofactor. In terms of tissue distribution, widely expressed, with maximum expression in pituitary gland, prostate, rectum and uterus.

Its subcellular location is the mitochondrion. It catalyses the reaction L-threonylcarbamoyladenylate + adenosine(37) in tRNA = N(6)-L-threonylcarbamoyladenosine(37) in tRNA + AMP + H(+). Required for the formation of a threonylcarbamoyl group on adenosine at position 37 (t(6)A37) in mitochondrial tRNAs that read codons beginning with adenine. Probably involved in the transfer of the threonylcarbamoyl moiety of threonylcarbamoyl-AMP (TC-AMP) to the N6 group of A37. Involved in mitochondrial genome maintenance. In Homo sapiens (Human), this protein is tRNA N6-adenosine threonylcarbamoyltransferase, mitochondrial.